Consider the following 236-residue polypeptide: Phospholipid hydroperoxide glutathione peroxidase 1, chloroplastic (236 aa).

Low complexity predominate over residues 1–16 (MVSMTTSSSSYGTFST). Positions 1-24 (MVSMTTSSSSYGTFSTVVNSSRPN) are disordered. The N-terminal 64 residues, 1 to 64 (MVSMTTSSSS…PINPGFLFKS (64 aa)), are a transit peptide targeting the chloroplast. Residue Cys-111 is part of the active site.

Belongs to the glutathione peroxidase family. As to expression, expressed in leaves, stems, flowers, green siliques and seeds.

It is found in the plastid. The protein resides in the chloroplast. It carries out the reaction a hydroperoxy polyunsaturated fatty acid + 2 glutathione = a hydroxy polyunsaturated fatty acid + glutathione disulfide + H2O. In terms of biological role, protects cells and enzymes from oxidative damage, by catalyzing the reduction of hydrogen peroxide, lipid peroxides and organic hydroperoxide, by glutathione. In Arabidopsis thaliana (Mouse-ear cress), this protein is Phospholipid hydroperoxide glutathione peroxidase 1, chloroplastic (GPX1).